The sequence spans 598 residues: Terpenoid synthase 1 (598 aa).

Asp-362, Asp-366, Asn-494, and Asp-502 together coordinate Mg(2+). Positions 362–366 match the DDXXD motif motif; that stretch reads DDTCD.

The protein belongs to the terpene synthase family. Tpsa subfamily. Mg(2+) serves as cofactor. The cofactor is Mn(2+). As to expression, expressed exclusively in siliques.

It localises to the cytoplasm. It participates in secondary metabolite biosynthesis; terpenoid biosynthesis. The polypeptide is Terpenoid synthase 1 (TPS01) (Arabidopsis thaliana (Mouse-ear cress)).